The primary structure comprises 503 residues: tRNA-guanine(15) transglycosylase (503 aa).

The active-site Nucleophile is the D86. D121 is a substrate binding site. Residues C278, C280, and C283 each contribute to the Zn(2+) site.

It belongs to the archaeosine tRNA-ribosyltransferase family. Requires Zn(2+) as cofactor.

It carries out the reaction guanosine(15) in tRNA + 7-cyano-7-deazaguanine = 7-cyano-7-carbaguanosine(15) in tRNA + guanine. Its pathway is tRNA modification; archaeosine-tRNA biosynthesis. Exchanges the guanine residue with 7-cyano-7-deazaguanine (preQ0) at position 15 in the dihydrouridine loop (D-loop) of archaeal tRNAs. In Saccharolobus solfataricus (strain ATCC 35092 / DSM 1617 / JCM 11322 / P2) (Sulfolobus solfataricus), this protein is tRNA-guanine(15) transglycosylase.